The chain runs to 355 residues: Alanine racemase (355 aa).

Residue Lys34 is the Proton acceptor; specific for D-alanine of the active site. Residue Lys34 is modified to N6-(pyridoxal phosphate)lysine. Arg133 is a binding site for substrate. Tyr249 acts as the Proton acceptor; specific for L-alanine in catalysis. Met297 contributes to the substrate binding site.

The protein belongs to the alanine racemase family. The cofactor is pyridoxal 5'-phosphate.

It catalyses the reaction L-alanine = D-alanine. Its pathway is amino-acid biosynthesis; D-alanine biosynthesis; D-alanine from L-alanine: step 1/1. Functionally, catalyzes the interconversion of L-alanine and D-alanine. May also act on other amino acids. The sequence is that of Alanine racemase (alr) from Rickettsia canadensis (strain McKiel).